The following is a 334-amino-acid chain: Beta-ketoacyl-[acyl-carrier-protein] synthase III (334 aa).

Active-site residues include C114 and H253. An ACP-binding region spans residues 254 to 258 (QANIR). N283 is an active-site residue.

This sequence belongs to the thiolase-like superfamily. FabH family. Homodimer.

Its subcellular location is the cytoplasm. The enzyme catalyses malonyl-[ACP] + acetyl-CoA + H(+) = 3-oxobutanoyl-[ACP] + CO2 + CoA. The protein operates within lipid metabolism; fatty acid biosynthesis. Catalyzes the condensation reaction of fatty acid synthesis by the addition to an acyl acceptor of two carbons from malonyl-ACP. Catalyzes the first condensation reaction which initiates fatty acid synthesis and may therefore play a role in governing the total rate of fatty acid production. Possesses both acetoacetyl-ACP synthase and acetyl transacylase activities. Its substrate specificity determines the biosynthesis of branched-chain and/or straight-chain of fatty acids. The polypeptide is Beta-ketoacyl-[acyl-carrier-protein] synthase III (Campylobacter concisus (strain 13826)).